We begin with the raw amino-acid sequence, 963 residues long: Longitudinals lacking protein, isoforms J/P/Q/S/Z (963 aa).

The 66-residue stretch at 32 to 97 (VDCTLAAEGK…MYRGEVNISQ (66 aa)) folds into the BTB domain. Disordered stretches follow at residues 115-200 (LSDN…SSVL), 228-340 (SSGP…ASAS), 447-469 (DAQQ…RIRV), and 482-520 (GKSS…VSTT). Composition is skewed to low complexity over residues 162-175 (SGDV…SSSP), 228-251 (SSGP…LTST), 263-293 (TSST…QTTS), and 329-340 (NSATGPNPASAS). Polar residues predominate over residues 491–512 (KLTQSKKSLISDAKTTNKTSTP). A C2H2-type 1; degenerate zinc finger spans residues 849 to 871 (WVCRNCNRTYKWKNSLKCHLKNE). The C2H2-type 2; degenerate zinc finger occupies 878–901 (YFCSKMCGYATNVHSNLKRHLNTK). Positions 900-963 (TKCRDREKDA…YTLVFQNDSA (64 aa)) are disordered. Residues 901-915 (KCRDREKDADDEKKP) show a composition bias toward basic and acidic residues. The segment covering 937–953 (SSSNNNNNGGGSSTSST) has biased composition (low complexity). Polar residues predominate over residues 954–963 (YTLVFQNDSA).

As to expression, by stage 11, isoform Q, isoform P and isoform Z are expressed throughout the mesoderm. From stage 15, expression of isoform P expands to all tissues, whereas expression of isoform Z and isoform Q becomes restricted during later stages; starting from stage 14 to 16, isoform Z is expressed in muscle, and isoform Q and isoform Z are expressed in the CNS. For some isoforms, expression is also seen in specific types of cells in the embryo; isoform Z is expressed in the ventral furrow at stage 5, and isoform Q is expressed around the tracheal pits at stage 11. Isoform Z also shows transient enrichment in a dorsal cell layer in the CNS at stages 13 and 14.

The protein localises to the nucleus. Functionally, putative transcription factor required for axon growth and guidance in the central and peripheral nervous systems. Repels CNS axons away from the midline by promoting the expression of the midline repellent sli and its receptor robo. The sequence is that of Longitudinals lacking protein, isoforms J/P/Q/S/Z from Drosophila melanogaster (Fruit fly).